We begin with the raw amino-acid sequence, 331 residues long: Isopentenyl-diphosphate delta-isomerase (331 aa).

Residue 4–5 (RK) participates in substrate binding. FMN-binding positions include 59–61 (AMT), serine 89, and asparagine 116. Glutamine 146 provides a ligand contact to substrate. Residue glutamate 147 coordinates Mg(2+). FMN is bound by residues lysine 178, serine 203, threonine 208, 252–254 (GIR), and 273–274 (SR).

It belongs to the IPP isomerase type 2 family. In terms of assembly, homooctamer. Dimer of tetramers. The cofactor is FMN. It depends on NADPH as a cofactor. Requires Mg(2+) as cofactor.

It is found in the cytoplasm. It carries out the reaction isopentenyl diphosphate = dimethylallyl diphosphate. In terms of biological role, involved in the biosynthesis of isoprenoids. Catalyzes the 1,3-allylic rearrangement of the homoallylic substrate isopentenyl (IPP) to its allylic isomer, dimethylallyl diphosphate (DMAPP). The sequence is that of Isopentenyl-diphosphate delta-isomerase from Streptococcus mutans serotype c (strain ATCC 700610 / UA159).